The chain runs to 47 residues: ATP-dependent zinc metalloprotease FTSH, chloroplastic (47 aa).

This sequence in the N-terminal section; belongs to the AAA ATPase family. It in the C-terminal section; belongs to the peptidase M41 family. Zn(2+) is required as a cofactor.

Its subcellular location is the plastid. The protein resides in the chloroplast membrane. Its function is as follows. Seems to act as an ATP-dependent zinc metallopeptidase. The protein is ATP-dependent zinc metalloprotease FTSH, chloroplastic of Populus euphratica (Euphrates poplar).